Consider the following 508-residue polypeptide: ATP synthase subunit alpha, chloroplastic (508 aa).

Position 171 to 178 (171 to 178 (GDRQTGKT)) interacts with ATP.

Belongs to the ATPase alpha/beta chains family. F-type ATPases have 2 components, CF(1) - the catalytic core - and CF(0) - the membrane proton channel. CF(1) has five subunits: alpha(3), beta(3), gamma(1), delta(1), epsilon(1). CF(0) has four main subunits: a, b, b' and c.

Its subcellular location is the plastid. It localises to the chloroplast thylakoid membrane. The catalysed reaction is ATP + H2O + 4 H(+)(in) = ADP + phosphate + 5 H(+)(out). In terms of biological role, produces ATP from ADP in the presence of a proton gradient across the membrane. The alpha chain is a regulatory subunit. The polypeptide is ATP synthase subunit alpha, chloroplastic (Gnetum parvifolium (Small-leaved jointfir)).